A 109-amino-acid chain; its full sequence is Small serum protein 2 (109 aa).

The signal sequence occupies residues 1-19; that stretch reads MRVFFSLIIFSFMLATCQG. Intrachain disulfides connect C21/C72, C39/C64, C59/C93, C62/C71, and C84/C107.

As to quaternary structure, forms a stable, non-covalent complex with serotriflin.

It is found in the secreted. Functionally, may serve as a self-defense protein against the toxic effects of the snake venom during accidental envenomation. Does not show inhibitory activity towards brevilysin H6. The sequence is that of Small serum protein 2 from Protobothrops flavoviridis (Habu).